The sequence spans 186 residues: Nucleoside triphosphate pyrophosphatase (186 aa).

Asp68 (proton acceptor) is an active-site residue.

It belongs to the Maf family. A divalent metal cation serves as cofactor.

Its subcellular location is the cytoplasm. The catalysed reaction is a ribonucleoside 5'-triphosphate + H2O = a ribonucleoside 5'-phosphate + diphosphate + H(+). It catalyses the reaction a 2'-deoxyribonucleoside 5'-triphosphate + H2O = a 2'-deoxyribonucleoside 5'-phosphate + diphosphate + H(+). Its function is as follows. Nucleoside triphosphate pyrophosphatase. May have a dual role in cell division arrest and in preventing the incorporation of modified nucleotides into cellular nucleic acids. This chain is Nucleoside triphosphate pyrophosphatase, found in Prochlorococcus marinus (strain MIT 9303).